The chain runs to 834 residues: Enhancer of filamentation 1 (834 aa).

The interval 1-505 is required for interaction with ITCH; it reads MKYKNLMARA…HQILSQTSHD (505 aa). One can recognise an SH3 domain in the interval 3-65; sequence YKNLMARALY…PGNRVKLLIG (63 aa). 7 positions are modified to phosphotyrosine; by ABL1: tyrosine 92, tyrosine 164, tyrosine 166, tyrosine 177, tyrosine 189, tyrosine 214, and tyrosine 223. The interval 102 to 229 is interacts strongly with spindle-regulatory protein D1M1; that stretch reads RDTIYQVPPS…KGVYAIPPSA (128 aa). The disordered stretch occupies residues 238–260; it reads EKDYDFPPPMRQAGRPDLRPEGV. Tyrosine 279 is subject to Phosphotyrosine; by ABL1. Positions 291–316 are disordered; it reads ARRHQSLSPNHPPPQLGQSVGSQNDA. A Phosphoserine modification is found at serine 296. Residues 306-315 are compositionally biased toward polar residues; it reads LGQSVGSQND. Tyrosine 317 is subject to Phosphotyrosine; by ABL1. Disordered regions lie at residues 328–398 and 560–623; these read PPAE…SPAQ and GPGS…GSER. The segment covering 332 to 344 has biased composition (basic and acidic residues); it reads TSEKANPQERDGV. Positions 351 to 834 are interacts with CTTN; that stretch reads NPPDAKGSRD…KRSLLEMATF (484 aa). A Caspase cleavage related site motif is present at residues 360 to 363; that stretch reads DLVD. A Phosphoserine modification is found at serine 369. Residues 369-395 are compositionally biased toward low complexity; the sequence is SFSSTGSTRSNMSTSSTSSKESSLSAS. The segment at 710–760 is divergent helix-loop-helix motif; it reads FYYDQCETHFISLLNAIDALFSCVSSAQPPRIFVAHSKFVILSAHKLVFIG. The tract at residues 710–834 is required for interaction with PLK1; it reads FYYDQCETHF…KRSLLEMATF (125 aa). Serine 780 is modified (phosphoserine; by CSNK1D and CSNK1E). Threonine 804 carries the phosphothreonine; by CSNK1E modification.

It belongs to the CAS family. Homodimer. Forms heterodimers with BCAR1/p130cas. Forms complexes with PTK2B/RAFTK, adapter protein CRKL and LYN kinase. Part of a complex composed of NEDD9, AURKA and CTTN; within the complex NEDD9 acts as a scaffold protein and is required for complex formation. Part of a ternary complex composed of SMAD3, ITCH/AIP4 and NEDD9/HEF1; within the complex NEDD9/HEF1 interacts (via N-terminus) with ITCH/AIP4 (via WW domains); the complex mediates ubiquitination and proteasomal degradation of NEDD9/HEF1. Interacts with SMAD3; the interaction promotes NEDD9 ubiquitination and proteasomal degradation. Interacts with ID2. Interacts with CTTN (via N-terminus). Interacts with MICAL. Interacts with TXNL4/DIM1. Interacts with BCAR3 (via Ras-GEF domain). Interacts with SH2D3C isoform 1 and isoform 2. Interacts with ECT2. Interacts with PTPN11/SHP-2 (via SH2 domains); the interaction is enhanced when NEDD9/CAS-L is tyrosine phosphorylated. Interacts (via C-terminus) with PLK1 (via polo box domains). Interacts with NKX2-5. Interacts with SMAD3; the interaction is inhibited by oxidation of NEDD9. Interacts with NEDD9/HEF1; interaction is induced by CXCL12 promotion of ABL-mediated phosphorylation of NEDD9/HEF1. Interacts (via SH3 domain) with PTK2/FAK. Interacts with FYN; in the presence of PTK2. Interacts with INPPL1/SHIP2. In terms of processing, cell cycle-regulated processing produces four isoforms: p115, p105, p65, and p55. Isoform p115 arises from p105 phosphorylation and appears later in the cell cycle. Isoform p55 arises from p105 as a result of cleavage at a caspase cleavage-related site and it appears specifically at mitosis. The p65 isoform is poorly detected. Post-translationally, polyubiquitinated by ITCH/AIP4, leading to proteasomal degradation. PTK2/FAK1 phosphorylates the protein at the YDYVHL motif (conserved among all cas proteins) following integrin stimulation. The SRC family kinases (FYN, SRC, LCK and CRK) are recruited to the phosphorylated sites and can phosphorylate other tyrosine residues. Ligation of either integrin beta-1 or B-cell antigen receptor on tonsillar B-cells and B-cell lines promotes tyrosine phosphorylation and both integrin and BCR-mediated tyrosine phosphorylation requires an intact actin network. Phosphorylation is required to recruit NEDD9 to T-cell receptor microclusters at the periphery of newly formed immunological synapses. In fibroblasts transformation with oncogene v-ABL results in an increase in tyrosine phosphorylation. Transiently phosphorylated following CD3 cross-linking and this phosphorylated form binds to CRKL and C3G. A mutant lacking the SH3 domain is phosphorylated upon CD3 cross-linking but not upon integrin beta-1 cross-linking. Tyrosine phosphorylation occurs upon stimulation of the G-protein coupled C1a calcitonin receptor. Calcitonin-stimulated tyrosine phosphorylation is mediated by calcium- and protein kinase C-dependent mechanisms and requires the integrity of the actin cytoskeleton. Phosphorylation at Ser-369 induces proteasomal degradation. Phosphorylated by LYN. Phosphorylation at Ser-780 by CSNK1D or CSNK1E, or phosphorylation of Thr-804 by CSNK1E enhances the interaction of NEDD9 with PLK1. As to expression, expressed in B-cells (at protein level). Expressed in the respiratory epithelium of the main bronchi to the bronchioles in the lungs (at protein level). High levels detected in kidney, lung, and placenta. Expressed in lymphocytes.

It localises to the cytoplasm. Its subcellular location is the cell cortex. The protein localises to the nucleus. It is found in the golgi apparatus. The protein resides in the cell projection. It localises to the lamellipodium. Its subcellular location is the cell junction. The protein localises to the focal adhesion. It is found in the cytoskeleton. The protein resides in the spindle pole. It localises to the cilium. Its subcellular location is the cilium basal body. The protein localises to the basolateral cell membrane. It is found in the spindle. Functionally, scaffolding protein which plays a central coordinating role for tyrosine-kinase-based signaling related to cell adhesion. As a focal adhesion protein, plays a role in embryonic fibroblast migration. May play an important role in integrin beta-1 or B cell antigen receptor (BCR) mediated signaling in B- and T-cells. Integrin beta-1 stimulation leads to recruitment of various proteins including CRKL and SHPTP2 to the tyrosine phosphorylated form. Promotes adhesion and migration of lymphocytes; as a result required for the correct migration of lymphocytes to the spleen and other secondary lymphoid organs. Plays a role in the organization of T-cell F-actin cortical cytoskeleton and the centralization of T-cell receptor microclusters at the immunological synapse. Negatively regulates cilia outgrowth in polarized cysts. Modulates cilia disassembly via activation of AURKA-mediated phosphorylation of HDAC6 and subsequent deacetylation of alpha-tubulin. Positively regulates RANKL-induced osteoclastogenesis. Required for the maintenance of hippocampal dendritic spines in the dentate gyrus and CA1 regions, thereby involved in spatial learning and memory. In Homo sapiens (Human), this protein is Enhancer of filamentation 1.